The following is an 837-amino-acid chain: SLIT and NTRK-like protein 4 (837 aa).

Residues 1-18 (MFLWLFLIVSALISSTNA) form the signal peptide. The Extracellular segment spans residues 19–618 (DSDISVEICN…SPPGGPVPLS (600 aa)). 6 LRR repeats span residues 60-81 (NFYH…TFVN), 84-105 (HAVS…AFLG), 108-129 (ALKQ…TFLG), 132-153 (NLEY…AFNK), 156-177 (KLKV…IFRF), and 179-200 (SLTH…GVLE). N81 carries an N-linked (GlcNAc...) asparagine glycan. The LRRCT 1 domain maps to 213 to 264 (NPWNCSCDLLPLKAWLENMPYNIYIGEAICETPSDLYGRLLKETNKQELCPM). An N-linked (GlcNAc...) asparagine glycan is attached at N325. The LRRNT domain occupies 333–375 (QTRVPPLTPCPVPCFCKTHPSDLGLSVNCQEKNIQSMSELTPK). LRR repeat units lie at residues 378–399 (NAKK…DFTE), 402–423 (GLDL…VFHN), 426–447 (NLRR…IFSG), 450–471 (NLQY…TFDS), 474–495 (NLQL…IFSG), and 497–518 (PLAR…GVLD). The N-linked (GlcNAc...) asparagine glycan is linked to N423. Residues 531–582 (NPWDCTCDLVALKLWLEKLNDGIVVKELKCETPVQFANIELKSLKNEILCPK) form the LRRCT 2 domain. The helical transmembrane segment at 619-639 (ILILSILVVLILTVFVAFCLL) threads the bilayer. Over 640 to 837 (VFVLRRNKKP…LEEQTALNKI (198 aa)) the chain is Cytoplasmic.

The protein belongs to the SLITRK family. Interacts (via LRR 1 and 2 repeats) with PTPRD (via extracellular domain). In the adult, significant expression is detected only in the brain. Broadly expressed in embryonic brain with highest expression in subventricular zone, subplate, cortical plate, pyramidal cell layer of hippocampus, thalamus and hypothalamus.

The protein resides in the membrane. It is found in the cell membrane. It is involved in synaptogenesis and promotes synapse differentiation. Suppresses neurite outgrowth. The polypeptide is SLIT and NTRK-like protein 4 (Slitrk4) (Mus musculus (Mouse)).